We begin with the raw amino-acid sequence, 681 residues long: Probable glutamate carboxypeptidase LAMP1 (681 aa).

Topologically, residues methionine 1–serine 6 are cytoplasmic. The chain crosses the membrane as a helical; Signal-anchor for type II membrane protein span at residues leucine 7–serine 24. Over proline 25–isoleucine 681 the chain is Extracellular. Residues asparagine 42, asparagine 140, asparagine 166, and asparagine 299 are each glycosylated (N-linked (GlcNAc...) asparagine). Positions serine 241–leucine 527 are catalytic. Positions 333 and 343 each coordinate Zn(2+). Glutamate 380 functions as the Nucleophile in the catalytic mechanism. Zn(2+)-binding residues include glutamate 381 and aspartate 409. Asparagine 441 carries an N-linked (GlcNAc...) asparagine glycan. Histidine 493 provides a ligand contact to Zn(2+). Asparagine 536 is a glycosylation site (N-linked (GlcNAc...) asparagine).

This sequence belongs to the peptidase M28 family. M28B subfamily. Requires Zn(2+) as cofactor.

Its subcellular location is the endoplasmic reticulum membrane. It carries out the reaction Release of an unsubstituted, C-terminal glutamyl residue, typically from Ac-Asp-Glu or folylpoly-gamma-glutamates.. Functionally, acts in association with AMP1 to suppress ectopic stem cell niche formation in the shoot apical meristem (SAM) independently of cytokinin signaling pathway. This Arabidopsis thaliana (Mouse-ear cress) protein is Probable glutamate carboxypeptidase LAMP1.